Reading from the N-terminus, the 380-residue chain is Glucose-1-phosphate adenylyltransferase (380 aa).

Alpha-D-glucose 1-phosphate-binding positions include Gly-164, 179–180 (EK), and Ser-190.

It belongs to the bacterial/plant glucose-1-phosphate adenylyltransferase family. In terms of assembly, homotetramer.

It catalyses the reaction alpha-D-glucose 1-phosphate + ATP + H(+) = ADP-alpha-D-glucose + diphosphate. It functions in the pathway glycan biosynthesis; glycogen biosynthesis. Its function is as follows. Involved in the biosynthesis of ADP-glucose, a building block required for the elongation reactions to produce glycogen. Catalyzes the reaction between ATP and alpha-D-glucose 1-phosphate (G1P) to produce pyrophosphate and ADP-Glc. In Lactococcus lactis subsp. lactis (strain IL1403) (Streptococcus lactis), this protein is Glucose-1-phosphate adenylyltransferase.